The primary structure comprises 305 residues: Protoheme IX farnesyltransferase (305 aa).

Transmembrane regions (helical) follow at residues 31–51, 52–72, 96–118, 123–145, 151–171, 179–199, 225–245, 247–267, and 281–301; these read VMSL…YSVH, PFIA…AGAI, VIES…FFMA, LLAS…IWLK, NIVI…AAVS, IILF…LALF, ILIY…IGMN, FIYL…AGSL, and FAYS…TNTI.

Belongs to the UbiA prenyltransferase family. Protoheme IX farnesyltransferase subfamily.

It localises to the cell inner membrane. The catalysed reaction is heme b + (2E,6E)-farnesyl diphosphate + H2O = Fe(II)-heme o + diphosphate. It functions in the pathway porphyrin-containing compound metabolism; heme O biosynthesis; heme O from protoheme: step 1/1. Converts heme B (protoheme IX) to heme O by substitution of the vinyl group on carbon 2 of heme B porphyrin ring with a hydroxyethyl farnesyl side group. This chain is Protoheme IX farnesyltransferase, found in Rickettsia rickettsii (strain Iowa).